The sequence spans 843 residues: Protein P (843 aa).

The interval 1-177 (MPLSYQHFRK…FCGSPYSWEQ (177 aa)) is terminal protein domain (TP). Positions 178–346 (ELQHGRLVFQ…YCLSHIVNLL (169 aa)) are spacer. Disordered stretches follow at residues 218–243 (LKQS…SGSI) and 290–316 (STSK…RSQS). Positions 290-299 (STSKRQSSSG) are enriched in polar residues. The interval 347–690 (EDWGPCTEHG…YLHLYPVARQ (344 aa)) is polymerase/reverse transcriptase domain (RT). Residues 357 to 600 (EHNIRIPRTP…YSLNFMGYVI (244 aa)) form the Reverse transcriptase domain. Mg(2+) contacts are provided by Asp-429, Asp-551, and Asp-552.

The protein belongs to the hepadnaviridae P protein family.

The catalysed reaction is DNA(n) + a 2'-deoxyribonucleoside 5'-triphosphate = DNA(n+1) + diphosphate. It catalyses the reaction Endonucleolytic cleavage to 5'-phosphomonoester.. With respect to regulation, activated by host HSP70 and HSP40 in vitro to be able to bind the epsilon loop of the pgRNA. Because deletion of the RNase H region renders the protein partly chaperone-independent, the chaperones may be needed indirectly to relieve occlusion of the RNA-binding site by this domain. Inhibited by several reverse-transcriptase inhibitors: Lamivudine, Adefovir and Entecavir. In terms of biological role, multifunctional enzyme that converts the viral RNA genome into dsDNA in viral cytoplasmic capsids. This enzyme displays a DNA polymerase activity that can copy either DNA or RNA templates, and a ribonuclease H (RNase H) activity that cleaves the RNA strand of RNA-DNA heteroduplexes in a partially processive 3'- to 5'-endonucleasic mode. Neo-synthesized pregenomic RNA (pgRNA) are encapsidated together with the P protein, and reverse-transcribed inside the nucleocapsid. Initiation of reverse-transcription occurs first by binding the epsilon loop on the pgRNA genome, and is initiated by protein priming, thereby the 5'-end of (-)DNA is covalently linked to P protein. Partial (+)DNA is synthesized from the (-)DNA template and generates the relaxed circular DNA (RC-DNA) genome. After budding and infection, the RC-DNA migrates in the nucleus, and is converted into a plasmid-like covalently closed circular DNA (cccDNA). The activity of P protein does not seem to be necessary for cccDNA generation, and is presumably released from (+)DNA by host nuclear DNA repair machinery. The protein is Protein P of Homo sapiens (Human).